A 128-amino-acid chain; its full sequence is MARIAGVDLPREKRIEVSLQYIYGIGKTSAKLILERANVSPVTRTKDLTDDEVRRIRETIEQNVKVEGDLRREISLNVKRLMDLGCYRGLRHRKGLPVRGQRTHTNARTRKGPKKGLVRKAAAPAPMA.

The segment covering 95-118 (GLPVRGQRTHTNARTRKGPKKGLV) has biased composition (basic residues). Positions 95–128 (GLPVRGQRTHTNARTRKGPKKGLVRKAAAPAPMA) are disordered.

It belongs to the universal ribosomal protein uS13 family. Part of the 30S ribosomal subunit. Forms a loose heterodimer with protein S19. Forms two bridges to the 50S subunit in the 70S ribosome.

Functionally, located at the top of the head of the 30S subunit, it contacts several helices of the 16S rRNA. In the 70S ribosome it contacts the 23S rRNA (bridge B1a) and protein L5 of the 50S subunit (bridge B1b), connecting the 2 subunits; these bridges are implicated in subunit movement. Contacts the tRNAs in the A and P-sites. The sequence is that of Small ribosomal subunit protein uS13 from Anaeromyxobacter dehalogenans (strain 2CP-1 / ATCC BAA-258).